The sequence spans 247 residues: Neurotrophic factor BDNF precursor form (247 aa).

The first 18 residues, 1 to 18, serve as a signal peptide directing secretion; it reads MTILFLTMVISYFGCMKA. Residues 19 to 128 constitute a propeptide that is removed on maturation; the sequence is APMKEANVRG…AANMSMRVRR (110 aa). N-linked (GlcNAc...) asparagine glycosylation is present at asparagine 121. 3 cysteine pairs are disulfide-bonded: cysteine 141–cysteine 208, cysteine 186–cysteine 237, and cysteine 196–cysteine 239.

This sequence belongs to the NGF-beta family. As to quaternary structure, monomers and homodimers. Binds to NTRK2/TRKB. Can form heterodimers with other neurotrophin family members, such as NTF3 and NTF4 (in vitro), but the physiological relevance of this is not clear. BDNF precursor form: interacts with the heterodimer formed by NGFR and SORCS2. Mature BDNF has much lower affinity for the heterodimer formed by NGFR and SORCS2. Post-translationally, N-glycosylated and glycosulfated, contrary to mature BDNF. In terms of processing, mature BDNF is produced by proteolytic removal of the propeptide, catalyzed by a FURIN family member. In addition, the precursor form is proteolytically cleaved within the propeptide, but this is not an obligatory intermediate for the production of mature BDNF. Can be converted into mature BDNF by plasmin (PLG).

It localises to the secreted. Functionally, important signaling molecule that activates signaling cascades downstream of NTRK2. During development, promotes the survival and differentiation of selected neuronal populations of the peripheral and central nervous systems. Participates in axonal growth, pathfinding and in the modulation of dendritic growth and morphology. Major regulator of synaptic transmission and plasticity at adult synapses in many regions of the CNS. The versatility of BDNF is emphasized by its contribution to a range of adaptive neuronal responses including long-term potentiation (LTP), long-term depression (LTD), certain forms of short-term synaptic plasticity, as well as homeostatic regulation of intrinsic neuronal excitability. Its function is as follows. Important signaling molecule that activates signaling cascades downstream of NTRK2. Activates signaling cascades via the heterodimeric receptor formed by NGFR and SORCS2. Signaling via NGFR and SORCS2 plays a role in synaptic plasticity and long-term depression (LTD). Binding to NGFR and SORCS2 promotes neuronal apoptosis. Promotes neuronal growth cone collapse. The protein is Neurotrophic factor BDNF precursor form (BDNF) of Ailuropoda melanoleuca (Giant panda).